A 448-amino-acid polypeptide reads, in one-letter code: Chaperone SurA (448 aa).

The signal sequence occupies residues 1–27; that stretch reads MKKTLRFAAVASGLVASLITVAPSASA. 2 PpiC domains span residues 185–288 and 301–399; these read QQDL…RLVE and IVQT…QVLG.

Its subcellular location is the periplasm. The enzyme catalyses [protein]-peptidylproline (omega=180) = [protein]-peptidylproline (omega=0). In terms of biological role, chaperone involved in the correct folding and assembly of outer membrane proteins. Recognizes specific patterns of aromatic residues and the orientation of their side chains, which are found more frequently in integral outer membrane proteins. May act in both early periplasmic and late outer membrane-associated steps of protein maturation. The chain is Chaperone SurA from Burkholderia pseudomallei (strain 1710b).